Here is a 380-residue protein sequence, read N- to C-terminus: Cobalt-precorrin-5B C(1)-methyltransferase (380 aa).

The protein belongs to the CbiD family.

The catalysed reaction is Co-precorrin-5B + S-adenosyl-L-methionine = Co-precorrin-6A + S-adenosyl-L-homocysteine. The protein operates within cofactor biosynthesis; adenosylcobalamin biosynthesis; cob(II)yrinate a,c-diamide from sirohydrochlorin (anaerobic route): step 6/10. In terms of biological role, catalyzes the methylation of C-1 in cobalt-precorrin-5B to form cobalt-precorrin-6A. This Methanosphaera stadtmanae (strain ATCC 43021 / DSM 3091 / JCM 11832 / MCB-3) protein is Cobalt-precorrin-5B C(1)-methyltransferase.